We begin with the raw amino-acid sequence, 463 residues long: MSVSTLESENAQPVAQTQNSELIYRLEDRPPLPQTLFAACQHLLAMFVAVITPALLICQALGLPAQDTQHIISMSLFASGVASIIQIKAWGPVGSGLLSIQGTSFNFVAPLIMGGTALKTGGADVPTMMAALFGTLMLASCTEMVISRVLHLARRIITPLVSGVVVMIIGLSLIQVGLTSIGGGYAAMSDNTFGAPKNLLLAGVVLALIILLNRQRNPYLRVASLVIAMAAGYALAWFMGMLPESNEPMTQELIMVPTPLYYGLGIEWSLLLPLMLVFMITSLETIGDITATSDVSEQPVSGPLYMKRLKGGVLANGLNSFVSAVFNTFPNSCFGQNNGVIQLTGVASRYVGFVVALMLIVLGLFPAVSGFVQHIPEPVLGGATLVMFGTIAASGVRIVSREPLNRRAILIIALSLAVGLGVSQQPLILQFAPEWLKNLLSSGIAAGGITAIVLNLIFPPEKQ.

Transmembrane regions (helical) follow at residues 43–63 (LLAMFVAVITPALLICQALGL), 71–91 (IISMSLFASGVASIIQIKAWG), 93–113 (VGSGLLSIQGTSFNFVAPLIM), 126–146 (PTMMAALFGTLMLASCTEMVI), 156–176 (IITPLVSGVVVMIIGLSLIQV), 192–212 (TFGAPKNLLLAGVVLALIILL), 222–242 (VASLVIAMAAGYALAWFMGML), 260–280 (LYYGLGIEWSLLLPLMLVFMI), 352–372 (GFVVALMLIVLGLFPAVSGFV), 379–399 (VLGGATLVMFGTIAASGVRIV), 409–429 (ILIIALSLAVGLGVSQQPLIL), and 439–459 (LLSSGIAAGGITAIVLNLIFP).

Belongs to the nucleobase:cation symporter-2 (NCS2) (TC 2.A.40) family.

Its subcellular location is the cell inner membrane. The catalysed reaction is xanthine(in) + H(+)(in) = xanthine(out) + H(+)(out). Specific, proton motive force-dependent high-affinity transporter for xanthine. The protein is Xanthine permease XanP (xanP) of Escherichia coli O6:H1 (strain CFT073 / ATCC 700928 / UPEC).